A 757-amino-acid polypeptide reads, in one-letter code: 5-methyltetrahydropteroyltriglutamate--homocysteine methyltransferase (757 aa).

Positions 18 and 116 each coordinate 5-methyltetrahydropteroyltri-L-glutamate. Position 437-439 (isoleucine 437–serine 439) interacts with L-homocysteine. Residues isoleucine 437 to serine 439 and glutamate 490 each bind L-methionine. Residues arginine 521–cysteine 522 and tryptophan 567 each bind 5-methyltetrahydropteroyltri-L-glutamate. An L-homocysteine-binding site is contributed by aspartate 605. Position 605 (aspartate 605) interacts with L-methionine. Zn(2+) contacts are provided by histidine 647, cysteine 649, histidine 658, aspartate 662, and glutamate 671. Residue histidine 701 is the Proton donor of the active site. Zn(2+) is bound at residue cysteine 733.

This sequence belongs to the vitamin-B12 independent methionine synthase family. Zn(2+) is required as a cofactor. As to expression, expressed in pollen (at protein level).

It carries out the reaction 5-methyltetrahydropteroyltri-L-glutamate + L-homocysteine = tetrahydropteroyltri-L-glutamate + L-methionine. It functions in the pathway amino-acid biosynthesis; L-methionine biosynthesis via de novo pathway; L-methionine from L-homocysteine (MetE route): step 1/1. Functionally, catalyzes the transfer of a methyl group from 5-methyltetrahydrofolate to homocysteine resulting in methionine formation. The chain is 5-methyltetrahydropteroyltriglutamate--homocysteine methyltransferase from Kali turgidum (Prickly saltwort).